The sequence spans 357 residues: Arginine kinase Cal b 2.0101 (357 aa).

Residues 9-91 form the Phosphagen kinase N-terminal domain; that stretch reads KLEEGFKKLE…FDPIIEDYHK (83 aa). L-arginine is bound at residue 64–68; sequence GVGVY. In terms of domain architecture, Phosphagen kinase C-terminal spans 119-356; it reads FVISTRVRCG…LELIKIEKEM (238 aa). Residues 122 to 126 and histidine 185 each bind ATP; that span reads STRVR. The cysteines at positions 201 and 271 are disulfide-linked. Glutamate 225 is a binding site for L-arginine. Residue arginine 229 participates in ATP binding. Cysteine 271 lines the L-arginine pocket. ATP contacts are provided by residues 280-284 and 309-314; these read RASVH and RGTRGE. L-arginine is bound at residue glutamate 314.

It belongs to the ATP:guanido phosphotransferase family. Expressed in chela muscle (at protein level). Expressed in muscle.

It catalyses the reaction L-arginine + ATP = N(omega)-phospho-L-arginine + ADP + H(+). Its function is as follows. Catalyzes the reversible transfer of high energy ATP gamma-phosphate group to L-arginine. This is Arginine kinase Cal b 2.0101 from Callinectes bellicosus (Warrior swimming crab).